The following is a 53-amino-acid chain: uncharacterized protein (53 aa).

Positions 1–10 are enriched in polar residues; sequence MHILTRSSKN. Residues 1–25 are disordered; sequence MHILTRSSKNAFPRSRSRQDIHISS.

This is an uncharacterized protein from Saccharomyces cerevisiae (strain ATCC 204508 / S288c) (Baker's yeast).